We begin with the raw amino-acid sequence, 662 residues long: Envelope glycoprotein (662 aa).

A signal peptide spans 1 to 34 (MEGPTHPKPSKDKTFSWDLMILVGVLLRLDVGMA). Residues 35–606 (NPSPHQIYNV…FNKSPWFTTL (572 aa)) are Extracellular-facing. Asn-43 and Asn-58 each carry an N-linked (GlcNAc...) asparagine; by host glycan. 2 disulfide bridges follow: Cys-115-Cys-132 and Cys-124-Cys-137. The disordered stretch occupies residues 251 to 281 (VLPDQKPPSRQSQIESRVTPHHSQGNGGTPG). A compositionally biased stretch (polar residues) spans 258-274 (PSRQSQIESRVTPHHSQ). Residues Asn-286, Asn-322, and Asn-327 are each glycosylated (N-linked (GlcNAc...) asparagine; by host). 3 disulfides stabilise this stretch: Cys-332/Cys-335, Cys-332/Cys-559, and Cys-551/Cys-558. Residues 332–335 (CWLC) carry the CXXC motif. 3 N-linked (GlcNAc...) asparagine; by host glycosylation sites follow: Asn-351, Asn-354, and Asn-430. Positions 468–488 (ISLTVALMLGGLTVGGIAAGV) are fusion peptide. 2 coiled-coil regions span residues 496–545 (LETA…ILFL) and 555–591 (KEECCFYADHTGLVRDNMAKLRERLKQRQQLFDSQQG). Positions 534 to 550 (LQNRRGLDILFLQEGGL) are immunosuppression. Positions 551–559 (CAALKEECC) match the CX6CC motif. A helical membrane pass occupies residues 607-627 (ISSIMGPLLILLLILLFGPCI). A lipid anchor (S-palmitoyl cysteine; by host) is attached at Cys-626. The Cytoplasmic portion of the chain corresponds to 628 to 662 (LNRLVQFVKDRISVVQALILTQQYQQIKQYDPDQP).

The mature envelope protein (Env) consists of a trimer of SU-TM heterodimers attached by a labile interchain disulfide bond. Post-translationally, specific enzymatic cleavages in vivo yield mature proteins. Envelope glycoproteins are synthesized as an inactive precursor that is N-glycosylated and processed likely by host cell furin or by a furin-like protease in the Golgi to yield the mature SU and TM proteins. The cleavage site between SU and TM requires the minimal sequence [KR]-X-[KR]-R. The R-peptide is released from the C-terminus of the cytoplasmic tail of the TM protein upon particle formation as a result of proteolytic cleavage by the viral protease. Cleavage of this peptide is required for TM to become fusogenic. The CXXC motif is highly conserved across a broad range of retroviral envelope proteins. It is thought to participate in the formation of a labile disulfide bond possibly with the CX6CC motif present in the transmembrane protein. Isomerization of the intersubunit disulfide bond to an SU intrachain disulfide bond is thought to occur upon receptor recognition in order to allow membrane fusion. In terms of processing, the transmembrane protein is palmitoylated. Post-translationally, the R-peptide is palmitoylated.

The protein localises to the virion membrane. The protein resides in the host cell membrane. In terms of biological role, the surface protein (SU) attaches the virus to the host cell by binding to its receptor. This interaction triggers the refolding of the transmembrane protein (TM) and is thought to activate its fusogenic potential by unmasking its fusion peptide. Fusion occurs at the host cell plasma membrane. The transmembrane protein (TM) acts as a class I viral fusion protein. Under the current model, the protein has at least 3 conformational states: pre-fusion native state, pre-hairpin intermediate state, and post-fusion hairpin state. During viral and target cell membrane fusion, the coiled coil regions (heptad repeats) assume a trimer-of-hairpins structure, positioning the fusion peptide in close proximity to the C-terminal region of the ectodomain. The formation of this structure appears to drive apposition and subsequent fusion of viral and target cell membranes. Membranes fusion leads to delivery of the nucleocapsid into the cytoplasm. The polypeptide is Envelope glycoprotein (env) (Felis catus (Cat)).